The primary structure comprises 451 residues: Pre-mRNA-splicing factor PRP46 (451 aa).

WD repeat units lie at residues 137 to 168 (GHLGWVRCVAIDPVDNEWFITGSNDTTMKVWD), 180 to 210 (GHVMTVRDVAVSDRHPYLFSVSEDKTVKCWD), 222 to 252 (GHLSGVRTVSIHPTLDLIATAGRDSVIKLWD), 264 to 294 (GHKGPINQVQCTPVDPQVVSSSTDATVRLWD), 306 to 335 (HHKRSVRATALHPKEFSVASACTDDIRSWG), 348 to 377 (EKTGIINTLSINQDDVLFAGGDNGVLSFYD), and 397 to 427 (EGERSVLCSTFDKTGLRLITGEADKSIKIWK).

The protein belongs to the WD repeat PRL1/PRL2 family. In terms of assembly, belongs to the CWC complex (or CEF1-associated complex), a spliceosome subcomplex composed of the U2, U5 and U6 snRNAs and at least BUD13, BUD31, BRR2, CDC40, CEF1, CLF1, CUS1, CWC2, CWC15, CWC21, CWC22, CWC23, CWC24, CWC25, CWC27, ECM2, HSH155, IST3, ISY1, LEA1, MSL1, NTC20, PRP8, PRP9, PRP11, PRP19, PRP21, PRP22, PRP45, PRP46, SLU7, SMB1, SMD1, SMD2, SMD3, SMX2, SMX3, SNT309, SNU114, SPP2, SYF1, SYF2, RSE1 and YJU2. Interacts with CEF1, CLF1, NTC20, PRP45 and SYF1.

The protein localises to the cytoplasm. It localises to the nucleus. In terms of biological role, involved in pre-mRNA splicing. May also be required for cell cycle progression at G2/M. The polypeptide is Pre-mRNA-splicing factor PRP46 (PRP46) (Saccharomyces cerevisiae (strain ATCC 204508 / S288c) (Baker's yeast)).